The following is a 144-amino-acid chain: Granulocyte-macrophage colony-stimulating factor (144 aa).

Positions 1–17 are cleaved as a signal peptide; sequence MWLQNLLFLGIVVYSFS. O-linked (GalNAc...) serine glycosylation occurs at Ser-22. Thr-27 is a glycosylation site (O-linked (GalNAc...) threonine). Disulfide bonds link Cys-71–Cys-113 and Cys-105–Cys-138. Asn-86 carries N-linked (GlcNAc...) asparagine glycosylation.

The protein belongs to the GM-CSF family. Monomer. The signaling GM-CSF receptor complex is a dodecamer of two head-to-head hexamers of two alpha, two beta, and two ligand subunits.

It is found in the secreted. Functionally, cytokine that stimulates the growth and differentiation of hematopoietic precursor cells from various lineages, including granulocytes, macrophages, eosinophils and erythrocytes. The protein is Granulocyte-macrophage colony-stimulating factor (Csf2) of Rattus norvegicus (Rat).